Reading from the N-terminus, the 450-residue chain is Chromosomal replication initiator protein DnaA (450 aa).

The interval 1–77 is domain I, interacts with DnaA modulators; it reads MTENEQIFWN…EVYNAQIAVD (77 aa). The segment at 77–109 is domain II; that stretch reads DYVYEDDLMIEQQHQGQQGYTEQAFQQLPAVQS. Residues 110-328 are domain III, AAA+ region; it reads DLNPKYSFDN…GALKDISLVA (219 aa). The ATP site is built by Gly-154, Gly-156, Lys-157, and Thr-158. A domain IV, binds dsDNA region spans residues 329–450; that stretch reads NFKQIDTITV…EIETIKNKIK (122 aa).

This sequence belongs to the DnaA family. Oligomerizes as a right-handed, spiral filament on DNA at oriC.

Its subcellular location is the cytoplasm. Functionally, plays an essential role in the initiation and regulation of chromosomal replication. ATP-DnaA binds to the origin of replication (oriC) to initiate formation of the DNA replication initiation complex once per cell cycle. Binds the DnaA box (a 9 base pair repeat at the origin) and separates the double-stranded (ds)DNA. Forms a right-handed helical filament on oriC DNA; dsDNA binds to the exterior of the filament while single-stranded (ss)DNA is stabiized in the filament's interior. The ATP-DnaA-oriC complex binds and stabilizes one strand of the AT-rich DNA unwinding element (DUE), permitting loading of DNA polymerase. After initiation quickly degrades to an ADP-DnaA complex that is not apt for DNA replication. Binds acidic phospholipids. The protein is Chromosomal replication initiator protein DnaA of Streptococcus equi subsp. equi (strain 4047).